A 413-amino-acid polypeptide reads, in one-letter code: L-methionine gamma-lyase (413 aa).

Residues 75–77 (YGR) and 105–106 (GM) each bind pyridoxal 5'-phosphate. Tyrosine 131 provides a ligand contact to substrate. 218 to 220 (SAT) provides a ligand contact to pyridoxal 5'-phosphate. Lysine 221 carries the post-translational modification N6-(pyridoxal phosphate)lysine. Residue arginine 365 participates in substrate binding. Residues 388 to 413 (RLPETAGAGREPSRTALRLPERAADR) form a disordered region.

This sequence belongs to the trans-sulfuration enzymes family. Homotetramer; dimer of active dimers. The cofactor is pyridoxal 5'-phosphate.

The catalysed reaction is L-methionine + H2O = methanethiol + 2-oxobutanoate + NH4(+). The enzyme catalyses L-homocysteine + H2O = 2-oxobutanoate + hydrogen sulfide + NH4(+) + H(+). It carries out the reaction L-cysteine + H2O = hydrogen sulfide + pyruvate + NH4(+) + H(+). Catalyzes the alpha,gamma-elimination of L-methionine to produce methanethiol, 2-oxobutanoate and ammonia. Is probably involved in L-methionine catabolism. Is also able to catalyze the alpha,gamma-elimination of L-homocysteine, and, to a lesser extent, the alpha,beta-elimination of L-cysteine. This chain is L-methionine gamma-lyase, found in Streptomyces avermitilis (strain ATCC 31267 / DSM 46492 / JCM 5070 / NBRC 14893 / NCIMB 12804 / NRRL 8165 / MA-4680).